The following is a 119-amino-acid chain: Protein phosphatase EYA4 (119 aa).

It belongs to the HAD-like hydrolase superfamily. EYA family. Requires Mg(2+) as cofactor.

Its subcellular location is the cytoplasm. It is found in the nucleus. It catalyses the reaction O-phospho-L-tyrosyl-[protein] + H2O = L-tyrosyl-[protein] + phosphate. Tyrosine phosphatase that specifically dephosphorylates 'Tyr-142' of histone H2AX (H2AXY142ph). 'Tyr-142' phosphorylation of histone H2AX plays a central role in DNA repair and acts as a mark that distinguishes between apoptotic and repair responses to genotoxic stress. Promotes efficient DNA repair by dephosphorylating H2AX, promoting the recruitment of DNA repair complexes containing MDC1. Its function as histone phosphatase probably explains its role in transcription regulation during organogenesis. May be involved in development of the eye. In Takifugu rubripes (Japanese pufferfish), this protein is Protein phosphatase EYA4 (eya4).